Consider the following 339-residue polypeptide: Ferrochelatase (339 aa).

Residues histidine 209 and glutamate 290 each coordinate Fe cation.

The protein belongs to the ferrochelatase family.

It localises to the cytoplasm. It carries out the reaction heme b + 2 H(+) = protoporphyrin IX + Fe(2+). The protein operates within porphyrin-containing compound metabolism; protoheme biosynthesis; protoheme from protoporphyrin-IX: step 1/1. Functionally, catalyzes the ferrous insertion into protoporphyrin IX. This chain is Ferrochelatase, found in Rhizobium meliloti (strain 1021) (Ensifer meliloti).